Here is a 580-residue protein sequence, read N- to C-terminus: FAD-dependent monooxygenase DEP4 (580 aa).

47–50 (VWSK) contributes to the FAD binding site. Residue 58-60 (FAQ) coordinates NADP(+). Position 112 (Val112) interacts with FAD. Residues 186-205 (VGRS…AGKK), 222-223 (AP), and 354-355 (DI) each bind NADP(+). Residue Met473 participates in FAD binding.

Belongs to the FAD-binding monooxygenase family. Requires FAD as cofactor.

The protein operates within polyketide biosynthesis. Its function is as follows. Part of the gene cluster that mediates the biosynthesis of depudecin, a highly oxidized eleven-carbon linear polyketide that acts as a histone deacetylase (HDAC) inhibitor and makes a small contribution to pathogenesis. The reducing polyketide synthase DEP5 is the central enzyme in depudecin biosynthesis by yielding the backbone polyketide chain. The monooxygenases DEP2 and DEP4, as well as the uncharacterized protein DEP1, then act as tailoring enzymes to modify the intermediate polyketide chain into depudecin. The protein is FAD-dependent monooxygenase DEP4 of Fusarium langsethiae.